The primary structure comprises 93 residues: Large ribosomal subunit protein mL41 (93 aa).

The transit peptide at Met1 to Leu13 directs the protein to the mitochondrion.

It belongs to the mitochondrion-specific ribosomal protein mL41 family. Component of the mitochondrial large ribosomal subunit (mt-LSU). Mature yeast 74S mitochondrial ribosomes consist of a small (37S) and a large (54S) subunit. The 37S small subunit contains a 15S ribosomal RNA (15S mt-rRNA) and at least 32 different proteins. The 54S large subunit contains a 21S rRNA (21S mt-rRNA) and at least 45 different proteins.

Its subcellular location is the mitochondrion. Functionally, component of the mitochondrial ribosome (mitoribosome), a dedicated translation machinery responsible for the synthesis of mitochondrial genome-encoded proteins, including at least some of the essential transmembrane subunits of the mitochondrial respiratory chain. The mitoribosomes are attached to the mitochondrial inner membrane and translation products are cotranslationally integrated into the membrane. In Schizosaccharomyces pombe (strain 972 / ATCC 24843) (Fission yeast), this protein is Large ribosomal subunit protein mL41 (mrpl27).